The following is a 204-amino-acid chain: Somatotropin (204 aa).

An N-terminal signal peptide occupies residues 1 to 17 (MDRAILLLSVLSVGVSS). Q18 is subject to Pyrrolidone carboxylic acid. H35 serves as a coordination point for Zn(2+). C69 and C177 are oxidised to a cystine. E186 contributes to the Zn(2+) binding site. Residues C194 and C202 are joined by a disulfide bond.

It belongs to the somatotropin/prolactin family.

It localises to the secreted. Its function is as follows. Growth hormone plays an important role in growth control and is involved in the regulation of several anabolic processes. Implicated as an osmoregulatory substance important for seawater adaptation. The sequence is that of Somatotropin (gh) from Dicentrarchus labrax (European seabass).